A 401-amino-acid polypeptide reads, in one-letter code: MYLEKLSLTDFRSYAQVDLTLEPGVTVLVGYNGIGKTNLMEAIGYLATLSSHRVSSDAPLLRFGTERALIRAKLVRGGQSTVLELEINGSRANRGRINRSNPVRARDILGICQTVLFAPEDLALVKGDPSNRRRFLDELLVSLMPRHSATRTDYDRVLKQRNALLKSGRSGKFTAGHEATLDVWDQHMARAGAELLYARLELVERIRPHLKAAYAQLTDGSKEADAIYRSTLQGILDDDGAGAGYAAEPAAVERVEDLRALSVEELTQRYVQAFAASRRKELERGISLVGPHRDDVELILGEAPAKGYASHGETWSMCLSLRLASYYVMLDDARTGGSAPILILDDVFAELDVQRRRKLAAIVSGAEQVLVTAAVDADIPDELAGRRVKVVPGGIDESESR.

30–37 (GYNGIGKT) provides a ligand contact to ATP.

The protein belongs to the RecF family.

It localises to the cytoplasm. In terms of biological role, the RecF protein is involved in DNA metabolism; it is required for DNA replication and normal SOS inducibility. RecF binds preferentially to single-stranded, linear DNA. It also seems to bind ATP. This is DNA replication and repair protein RecF from Arthrobacter sp. (strain FB24).